Here is a 129-residue protein sequence, read N- to C-terminus: Protein LLP homolog (129 aa).

The span at 1–21 (MAKSLRSKWKRKMRAEKRKKN) shows a compositional bias: basic residues. Residues 1 to 27 (MAKSLRSKWKRKMRAEKRKKNAPKEAS) are disordered. Glycyl lysine isopeptide (Lys-Gly) (interchain with G-Cter in SUMO2) cross-links involve residues lysine 67 and lysine 74. Basic residues predominate over residues 100 to 122 (RQRKRLKAKREKRKGKSKAKAVK). The tract at residues 100–129 (RQRKRLKAKREKRKGKSKAKAVKVAKGLAW) is disordered.

Belongs to the learning-associated protein family. As to quaternary structure, interacts with CTCF, MYO1C and with the transcriptional machinery, including RNA polymerase II and TBP.

It localises to the nucleus. It is found in the nucleolus. The protein resides in the chromosome. Functionally, in hippocampal neurons, regulates dendritic and spine growth and synaptic transmission. In Homo sapiens (Human), this protein is Protein LLP homolog (LLPH).